The primary structure comprises 276 residues: NH(3)-dependent NAD(+) synthetase (276 aa).

43–50 serves as a coordination point for ATP; sequence GISGGVDS. Residue Asp-49 coordinates Mg(2+). Residue Arg-146 coordinates deamido-NAD(+). Thr-166 lines the ATP pocket. Residue Glu-171 participates in Mg(2+) binding. Deamido-NAD(+) contacts are provided by Lys-179 and Asp-186. Residues Lys-195 and Thr-217 each coordinate ATP. 266–267 contributes to the deamido-NAD(+) binding site; sequence HK.

Belongs to the NAD synthetase family. In terms of assembly, homodimer.

The enzyme catalyses deamido-NAD(+) + NH4(+) + ATP = AMP + diphosphate + NAD(+) + H(+). It participates in cofactor biosynthesis; NAD(+) biosynthesis; NAD(+) from deamido-NAD(+) (ammonia route): step 1/1. Catalyzes the ATP-dependent amidation of deamido-NAD to form NAD. Uses ammonia as a nitrogen source. The sequence is that of NH(3)-dependent NAD(+) synthetase from Shewanella baltica (strain OS223).